A 681-amino-acid chain; its full sequence is GAS2-like protein 1 (681 aa).

Ala-2 is modified (N-acetylalanine). The Calponin-homology (CH) domain occupies Glu-27 to Ala-148. Disordered regions lie at residues Leu-168–Asp-204, Ser-278–Leu-509, and Ala-536–Met-681. Residues Glu-186 to Arg-199 show a composition bias toward low complexity. Thr-193 is subject to Phosphothreonine. The GAR domain maps to Ser-203–Arg-275. A compositionally biased stretch (polar residues) spans Phe-291 to Arg-303. Ser-306 and Ser-316 each carry phosphoserine. The segment covering Ser-327 to Leu-342 has biased composition (basic and acidic residues). Thr-334 bears the Phosphothreonine mark. A phosphoserine mark is found at Ser-352 and Ser-355. The segment covering Asp-354 to Gly-365 has biased composition (low complexity). A compositionally biased stretch (basic and acidic residues) spans Arg-370–Glu-381. Thr-391 carries the phosphothreonine modification. A Phosphoserine modification is found at Ser-394. Residues Gln-404–Arg-413 show a composition bias toward basic and acidic residues. 4 positions are modified to phosphoserine: Ser-436, Ser-438, Ser-479, and Ser-486. Basic and acidic residues predominate over residues Gln-437 to Gln-454. The span at Pro-475 to Pro-493 shows a compositional bias: low complexity. At Arg-487 the chain carries Omega-N-methylarginine. 2 positions are modified to phosphoserine: Ser-490 and Ser-492. Thr-498 carries the phosphothreonine modification. Arg-504 carries the omega-N-methylarginine modification. Residues Gly-542–Pro-556 show a composition bias toward pro residues. A compositionally biased stretch (low complexity) spans Asp-557 to Ser-571. Arg-633 is modified (omega-N-methylarginine). The span at Gly-634–Pro-644 shows a compositional bias: basic and acidic residues. Ser-657 carries the post-translational modification Phosphoserine.

It belongs to the GAS2 family. In terms of assembly, interacts with MAPRE1.

Its subcellular location is the cytoplasm. It localises to the cytoskeleton. The protein resides in the stress fiber. In terms of biological role, involved in the cross-linking of microtubules and microfilaments. Regulates microtubule dynamics and stability by interacting with microtubule plus-end tracking proteins, such as MAPRE1, to regulate microtubule growth along actin stress fibers. The sequence is that of GAS2-like protein 1 (GAS2L1) from Homo sapiens (Human).